The sequence spans 228 residues: Eukaryotic translation initiation factor 4E-1 (228 aa).

Residues 1–19 (MATAEMEKTTTFDEAEKVK) show a composition bias toward basic and acidic residues. Residues 1-33 (MATAEMEKTTTFDEAEKVKLNANEADDEVEEGE) form a disordered region. Over residues 24 to 33 (EADDEVEEGE) the composition is skewed to acidic residues. 2 EIF4G-binding regions span residues 53–56 (HPLE) and 63–99 (FDNPVAKSKQAAWGSSLRNVYTFSTVEDFWGAYNNIH). MRNA contacts are provided by residues 71 to 76 (KQAAWG), Lys-103, and 121 to 122 (WE). A disulfide bond links Cys-126 and Cys-164. The tract at residues 147–156 (YTLLAMIGHQ) is EIF4G-binding. MRNA-binding positions include 171 to 176 (RGKGEK) and 216 to 220 (KRLDR).

This sequence belongs to the eukaryotic initiation factor 4E family. In terms of assembly, EIF4F is a multi-subunit complex, the composition of which varies with external and internal environmental conditions. It is composed of at least EIF4A, EIF4E and EIF4G. EIF4E is also known to interact with other partners. In higher plants two isoforms of EIF4F have been identified, named isoform EIF4F and isoform EIF(iso)4F. Isoform EIF4F has subunits p220 and p26, whereas isoform EIF(iso)4F has subunits p82 and p28. As to quaternary structure, (Microbial infection) Interacts with potyvirus viral genome-linked protein (VPg); this interaction is possible in susceptible hosts but is impaired in resistant plants. Thus the VPg of tobacco etch virus (TEV) strain HAT interacts with susceptible alleles pvr2(+), pvr2(3) and pvr2(9) but not with the resistant allele pvr2(2), the VPg of TEV strain CAA10 interacts with susceptible alleles pvr2(+), pvr2(2), pvr2(3) and pvr2(9), the VPg of potato virus Y (PVY) strain LYE84 interacts with tomato eIF4E1 and eIF4E2 as well as with the Capsicum annuum eIF4E1 susceptible allele pvr2(+) but not with resistant alleles pvr2(1), pvr2(2), pvr2(3), pvr2(4), pvr2(5), pvr2(6), pvr2(7), pvr2(8) and pvr2(9) and the VPg of PVY strain SON41 interacts with C.annuum eIF4E1 susceptible alleles pvr2(+), pvr2(1), pvr2(2), pvr2(3) and pvr2(4) but not with resistant alleles pvr2(5), pvr2(6), pvr2(7), pvr2(8) and pvr2(9). In addition, the susceptible allele pvr1(+) interacts strongly with TEV strains HAT and NW VPg while resistance alleles (pvr1, pvr1(1), and pvr1(2)) fail to bind TEV VPg. In terms of processing, according to the redox status, the Cys-126-Cys-164 disulfide bridge may have a role in regulating protein function by affecting its ability to bind capped mRNA.

Its subcellular location is the nucleus. It is found in the cytoplasm. In terms of biological role, component of the protein complex eIF4F, which is involved in the recognition of the mRNA cap, ATP-dependent unwinding of 5'-terminal secondary structure and recruitment of mRNA to the ribosome. Recognizes and binds the 7-methylguanosine-containing mRNA cap during an early step in the initiation of protein synthesis and facilitates ribosome binding by inducing the unwinding of the mRNAs secondary structures. Key component of recessive resistance to potyviruses. Its function is as follows. (Microbial infection) Susceptibility host factor required for viral infection (e.g. potato virus Y (PVY) and tobacco etch virus (TEV)) by recruiting viral RNAs to the host ribosomal complex via an interaction with viral genome-linked protein (VPg). In Capsicum annuum (Capsicum pepper), this protein is Eukaryotic translation initiation factor 4E-1.